Reading from the N-terminus, the 475-residue chain is tRNA-2-methylthio-N(6)-dimethylallyladenosine synthase (475 aa).

Positions 1–10 (MQETTVKRDG) are enriched in basic and acidic residues. Positions 1–22 (MQETTVKRDGASPSDAGTPATT) are disordered. One can recognise an MTTase N-terminal domain in the interval 27-144 (GKLYIRTFGC…LPDLIKRRRA (118 aa)). [4Fe-4S] cluster is bound by residues C36, C73, C107, C181, C185, and C188. The region spanning 167-400 (RVDGATAFVS…QALINQQAAA (234 aa)) is the Radical SAM core domain. Residues 403–466 (QGMIGTRQRV…TNSLRGRVAG (64 aa)) enclose the TRAM domain.

The protein belongs to the methylthiotransferase family. MiaB subfamily. In terms of assembly, monomer. [4Fe-4S] cluster serves as cofactor.

It localises to the cytoplasm. It catalyses the reaction N(6)-dimethylallyladenosine(37) in tRNA + (sulfur carrier)-SH + AH2 + 2 S-adenosyl-L-methionine = 2-methylsulfanyl-N(6)-dimethylallyladenosine(37) in tRNA + (sulfur carrier)-H + 5'-deoxyadenosine + L-methionine + A + S-adenosyl-L-homocysteine + 2 H(+). Its function is as follows. Catalyzes the methylthiolation of N6-(dimethylallyl)adenosine (i(6)A), leading to the formation of 2-methylthio-N6-(dimethylallyl)adenosine (ms(2)i(6)A) at position 37 in tRNAs that read codons beginning with uridine. The sequence is that of tRNA-2-methylthio-N(6)-dimethylallyladenosine synthase from Bordetella parapertussis (strain 12822 / ATCC BAA-587 / NCTC 13253).